Reading from the N-terminus, the 267-residue chain is MHAGLRCDASTDPGLCGVVAVGDHPAAAAAWAEQLGVPVLEHRPQEGSGVILLADEPPALQLLGRRAPGPVAIDFTDHQLQRRVAGSTLRRDPLARAVGLHRRPQTAVVDATAGLGHDGWVLAALGARMTWIERSPVLAALLDAALERARANAQHADTATRVRLHPGDLCHLLPELDATSREVVYIDPMYPDGSTRGAVGRPAQVLRALHADARGPDEDQLLAAALGHATRRVVVKRPQRAAPVAGPPPSRSVAGRAVRFDVYEVNG.

S-adenosyl-L-methionine-binding positions include 133 to 134 (ER) and Asp-187.

It belongs to the methyltransferase superfamily. RsmJ family.

The protein localises to the cytoplasm. The catalysed reaction is guanosine(1516) in 16S rRNA + S-adenosyl-L-methionine = N(2)-methylguanosine(1516) in 16S rRNA + S-adenosyl-L-homocysteine + H(+). Specifically methylates the guanosine in position 1516 of 16S rRNA. In Halorhodospira halophila (strain DSM 244 / SL1) (Ectothiorhodospira halophila (strain DSM 244 / SL1)), this protein is Ribosomal RNA small subunit methyltransferase J.